The chain runs to 142 residues: Large ribosomal subunit protein uL11 (142 aa).

This sequence belongs to the universal ribosomal protein uL11 family. As to quaternary structure, part of the ribosomal stalk of the 50S ribosomal subunit. Interacts with L10 and the large rRNA to form the base of the stalk. L10 forms an elongated spine to which L12 dimers bind in a sequential fashion forming a multimeric L10(L12)X complex. One or more lysine residues are methylated.

Forms part of the ribosomal stalk which helps the ribosome interact with GTP-bound translation factors. This chain is Large ribosomal subunit protein uL11, found in Serratia proteamaculans (strain 568).